Consider the following 197-residue polypeptide: Peptide deformylase (197 aa).

Residues C106 and H148 each coordinate Fe cation. Residue E149 is part of the active site. Residue H152 coordinates Fe cation.

This sequence belongs to the polypeptide deformylase family. Requires Fe(2+) as cofactor.

The catalysed reaction is N-terminal N-formyl-L-methionyl-[peptide] + H2O = N-terminal L-methionyl-[peptide] + formate. Removes the formyl group from the N-terminal Met of newly synthesized proteins. Requires at least a dipeptide for an efficient rate of reaction. N-terminal L-methionine is a prerequisite for activity but the enzyme has broad specificity at other positions. The sequence is that of Peptide deformylase from Mycolicibacterium vanbaalenii (strain DSM 7251 / JCM 13017 / BCRC 16820 / KCTC 9966 / NRRL B-24157 / PYR-1) (Mycobacterium vanbaalenii).